The chain runs to 161 residues: 2-C-methyl-D-erythritol 2,4-cyclodiphosphate synthase (161 aa).

Residues aspartate 13 and histidine 15 each coordinate a divalent metal cation. Residues 13-15 and 40-41 contribute to the 4-CDP-2-C-methyl-D-erythritol 2-phosphate site; these read DAH and HS. Histidine 48 provides a ligand contact to a divalent metal cation. Residue 62-64 participates in 4-CDP-2-C-methyl-D-erythritol 2-phosphate binding; sequence DIG.

Belongs to the IspF family. As to quaternary structure, homotrimer. The cofactor is a divalent metal cation.

The enzyme catalyses 4-CDP-2-C-methyl-D-erythritol 2-phosphate = 2-C-methyl-D-erythritol 2,4-cyclic diphosphate + CMP. It participates in isoprenoid biosynthesis; isopentenyl diphosphate biosynthesis via DXP pathway; isopentenyl diphosphate from 1-deoxy-D-xylulose 5-phosphate: step 4/6. In terms of biological role, involved in the biosynthesis of isopentenyl diphosphate (IPP) and dimethylallyl diphosphate (DMAPP), two major building blocks of isoprenoid compounds. Catalyzes the conversion of 4-diphosphocytidyl-2-C-methyl-D-erythritol 2-phosphate (CDP-ME2P) to 2-C-methyl-D-erythritol 2,4-cyclodiphosphate (ME-CPP) with a corresponding release of cytidine 5-monophosphate (CMP). In Deinococcus radiodurans (strain ATCC 13939 / DSM 20539 / JCM 16871 / CCUG 27074 / LMG 4051 / NBRC 15346 / NCIMB 9279 / VKM B-1422 / R1), this protein is 2-C-methyl-D-erythritol 2,4-cyclodiphosphate synthase.